Consider the following 258-residue polypeptide: UPF0246 protein YaaA (258 aa).

The protein belongs to the UPF0246 family.

The chain is UPF0246 protein YaaA from Escherichia coli (strain SMS-3-5 / SECEC).